A 562-amino-acid polypeptide reads, in one-letter code: Cytochrome c oxidase subunit 1 (562 aa).

The helical transmembrane segment at 21-41 (TLYFLVLGFLALIVGSLFGPF) threads the bilayer. Residue H72 participates in Fe(II)-heme a binding. 8 helical membrane-spanning segments follow: residues 74–94 (VLNA…YLPA), 105–125 (LMWL…LPLL), 144–164 (AFYL…YIVL), 187–207 (VVFW…AVLF), 227–247 (LFWW…YAII), 267–287 (LAFL…QFAD), 300–320 (VLTL…AASL), and 345–365 (AFVA…GGIV). H233, Y237, H282, and H283 together coordinate Cu cation. Residues 233–237 (HPIVY) constitute a cross-link (1'-histidyl-3'-tyrosine (His-Tyr)). H384 serves as a coordination point for heme a3. 4 consecutive transmembrane segments (helical) span residues 385–405 (FHLQ…YWLL), 420–440 (LGLA…VGLH), 471–491 (VLAG…LFSV), and 527–547 (IGFW…PTLV). Residue H386 participates in Fe(II)-heme a binding.

The protein belongs to the heme-copper respiratory oxidase family. The cofactor is heme. Cu cation serves as cofactor.

It is found in the cell membrane. It carries out the reaction 4 Fe(II)-[cytochrome c] + O2 + 8 H(+)(in) = 4 Fe(III)-[cytochrome c] + 2 H2O + 4 H(+)(out). It functions in the pathway energy metabolism; oxidative phosphorylation. The chain is Cytochrome c oxidase subunit 1 (cbaA) from Thermus thermophilus (strain ATCC 27634 / DSM 579 / HB8).